The sequence spans 102 residues: 10 kDa heat shock protein, mitochondrial (102 aa).

Alanine 2 carries the N-acetylalanine modification. The residue at position 8 (lysine 8) is an N6-acetyllysine. Lysine 28 bears the N6-succinyllysine mark. Lysine 40 carries the post-translational modification N6-acetyllysine; alternate. Lysine 40, lysine 54, and lysine 56 each carry N6-malonyllysine; alternate. 3 positions are modified to N6-succinyllysine; alternate: lysine 40, lysine 54, and lysine 56. Lysine 56 bears the N6-acetyllysine; alternate mark. A Phosphoserine modification is found at serine 57. N6-acetyllysine; alternate is present on residues lysine 66 and lysine 70. N6-succinyllysine; alternate is present on residues lysine 66 and lysine 70. Threonine 79 carries the post-translational modification Phosphothreonine. N6-acetyllysine; alternate is present on residues lysine 80 and lysine 86. Lysine 80 and lysine 86 each carry N6-succinyllysine; alternate. Lysine 99 is modified (N6-acetyllysine).

This sequence belongs to the GroES chaperonin family. In terms of assembly, homoheptamer arranged in a ring structure. 2 heptameric Hsp10 rings interact with a Hsp60 tetradecamer in the structure of a back-to-back double heptameric ring to form the symmetrical football complex.

The protein resides in the mitochondrion matrix. Co-chaperonin implicated in mitochondrial protein import and macromolecular assembly. Together with Hsp60, facilitates the correct folding of imported proteins. May also prevent misfolding and promote the refolding and proper assembly of unfolded polypeptides generated under stress conditions in the mitochondrial matrix. The functional units of these chaperonins consist of heptameric rings of the large subunit Hsp60, which function as a back-to-back double ring. In a cyclic reaction, Hsp60 ring complexes bind one unfolded substrate protein per ring, followed by the binding of ATP and association with 2 heptameric rings of the co-chaperonin Hsp10. This leads to sequestration of the substrate protein in the inner cavity of Hsp60 where, for a certain period of time, it can fold undisturbed by other cell components. Synchronous hydrolysis of ATP in all Hsp60 subunits results in the dissociation of the chaperonin rings and the release of ADP and the folded substrate protein. The sequence is that of 10 kDa heat shock protein, mitochondrial (Hspe1) from Mus musculus (Mouse).